The chain runs to 85 residues: Probable [Fe-S]-dependent transcriptional repressor (85 aa).

Residues cysteine 56, cysteine 61, cysteine 64, and cysteine 71 each contribute to the iron-sulfur cluster site.

The protein belongs to the FeoC family.

In terms of biological role, may function as a transcriptional regulator that controls feoABC expression. This is Probable [Fe-S]-dependent transcriptional repressor from Yersinia pseudotuberculosis serotype O:1b (strain IP 31758).